The chain runs to 309 residues: Homoserine O-succinyltransferase (309 aa).

Residue Cys142 is the Acyl-thioester intermediate of the active site. Positions 163 and 192 each coordinate substrate. The active-site Proton acceptor is His235. Glu237 is an active-site residue. Residue Arg249 participates in substrate binding.

It belongs to the MetA family.

The protein localises to the cytoplasm. The catalysed reaction is L-homoserine + succinyl-CoA = O-succinyl-L-homoserine + CoA. Its pathway is amino-acid biosynthesis; L-methionine biosynthesis via de novo pathway; O-succinyl-L-homoserine from L-homoserine: step 1/1. Functionally, transfers a succinyl group from succinyl-CoA to L-homoserine, forming succinyl-L-homoserine. This Cronobacter sakazakii (strain ATCC BAA-894) (Enterobacter sakazakii) protein is Homoserine O-succinyltransferase.